The primary structure comprises 356 residues: TPR repeat-containing protein P27G11.02 (356 aa).

Residues 1 to 20 (MRMQWIWKSRRSLQNVFIRR) constitute a mitochondrion transit peptide. 2 TPR repeats span residues 194–227 (SRLF…TMAN) and 290–323 (AAAF…RKDD).

The protein localises to the mitochondrion. The sequence is that of TPR repeat-containing protein P27G11.02 from Schizosaccharomyces pombe (strain 972 / ATCC 24843) (Fission yeast).